The sequence spans 332 residues: Biotin synthase (332 aa).

The 230-residue stretch at tyrosine 46–arginine 275 folds into the Radical SAM core domain. [4Fe-4S] cluster-binding residues include cysteine 64, cysteine 68, and cysteine 71. The [2Fe-2S] cluster site is built by cysteine 108, cysteine 140, cysteine 200, and arginine 270.

Belongs to the radical SAM superfamily. Biotin synthase family. Homodimer. [4Fe-4S] cluster serves as cofactor. The cofactor is [2Fe-2S] cluster.

The catalysed reaction is (4R,5S)-dethiobiotin + (sulfur carrier)-SH + 2 reduced [2Fe-2S]-[ferredoxin] + 2 S-adenosyl-L-methionine = (sulfur carrier)-H + biotin + 2 5'-deoxyadenosine + 2 L-methionine + 2 oxidized [2Fe-2S]-[ferredoxin]. The protein operates within cofactor biosynthesis; biotin biosynthesis; biotin from 7,8-diaminononanoate: step 2/2. Functionally, catalyzes the conversion of dethiobiotin (DTB) to biotin by the insertion of a sulfur atom into dethiobiotin via a radical-based mechanism. The polypeptide is Biotin synthase (Lysinibacillus sphaericus (Bacillus sphaericus)).